We begin with the raw amino-acid sequence, 496 residues long: Tripartite motif-containing protein 30A (496 aa).

An RING-type zinc finger spans residues 15–59 (CPICLELLKEPVSADCNHSFCRACITLNYESNRNTDGKGNCPVCR). Residues 91 to 132 (QKVNICAQHGEKLRLFCRKDMMVICWLCERSQEHRGHQTALI) form a B box-type zinc finger. C96, H99, C118, and H124 together coordinate Zn(2+). A coiled-coil region spans residues 173–239 (NQIQINVENV…RDLISDVEHH (67 aa)). The segment at 205–210 (KKEKKE) is highly hydrophilic. Positions 268–276 (TVPQKRKRT) match the Nuclear localization signal motif. Residues 281 to 496 (DLKGMLQVYQ…EPMTICGPPS (216 aa)) form the B30.2/SPRY domain.

As to quaternary structure, homomultimer. Interacts with NR2C2/TAK1, TAB2 and TAB3. Does not interact with NLRP3, NLRC4 or TAB1. Highly expressed in spleen and lymph nodes (at protein level).

The protein resides in the cytoplasm. Its subcellular location is the nucleus. In terms of biological role, trans-acting factor that regulates gene expression of interleukin 2 receptor alpha chain. May affect IL2R-alpha expression through cis-acting negative regulatory elements or through competition with proteins that bind to enhancer or activator sequences. Negatively regulates Toll-like receptor (TLR)-mediated activation of NFKB by promoting degradation of TAB2 and TAB3 and preventing TRAF6 autoubiquitination. Negatively regulates production of reactive oxygen species (ROS) which inhibits activation of the NLRP3 inflammasome complex. This, in turn, regulates activation of CASP1 and subsequent cleavage of IL1B and IL18. No activity detected against a range of retroviruses including a number of lentiviruses, gammaretroviruses and betaretroviruses. The chain is Tripartite motif-containing protein 30A (Trim30a) from Mus musculus (Mouse).